The following is a 579-amino-acid chain: Nuclear receptor subfamily 1 group D member 2 (579 aa).

The segment at 1 to 60 (MEVNAGGVIAYISSSSSASSPASCHSEGSENSFQSSSSSVPSSPNSSNSDTNGNPKNGDL) is required for phosphorylation by CSNK1E and cytoplasmic localization. Positions 1–99 (MEVNAGGVIA…HSGVTKFSGM (99 aa)) are modulating. The segment covering 13 to 54 (SSSSSASSPASCHSEGSENSFQSSSSSVPSSPNSSNSDTNGN) has biased composition (low complexity). Residues 13 to 61 (SSSSSASSPASCHSEGSENSFQSSSSSVPSSPNSSNSDTNGNPKNGDLA) form a disordered region. Residue Ser-46 is modified to Phosphoserine; by GSK3-beta. Positions 100-176 (VLLCKVCGDV…VGMSRDAVRF (77 aa)) form a DNA-binding region, nuclear receptor. 2 NR C4-type zinc fingers span residues 103–123 (CKVC…CEGC) and 140–164 (CLKN…FKKC). 2 positions are modified to N6-acetyllysine; by KAT5: Lys-162 and Lys-163. A disordered region spans residues 222 to 250 (PAQEQLRPKPQLEQENIKSSSPPSSDFAK). The segment covering 227–237 (LRPKPQLEQEN) has biased composition (basic and acidic residues). Disulfide bonds link Cys-337–Cys-343 and Cys-374–Cys-384. Positions 369–579 (KNSYLCNTGG…EELLAFKVHP (211 aa)) constitute an NR LBD domain. Residues Cys-384 and His-568 each contribute to the heme site. The interaction with ZNHIT1 stretch occupies residues 397–579 (SGHEIWEEFS…EELLAFKVHP (183 aa)).

It belongs to the nuclear hormone receptor family. NR1 subfamily. Binds DNA as a monomer or a homodimer. Interacts with NCOA5 coactivator, leading to a strong increase of transcription of target genes. Interacts (via N-terminus) with KAT5. Interacts (via C-terminus) with HDAC1. Interacts with ZNHIT1. Interacts with SIAH2. Deacetylated by HDAC1. Acetylation and deacetylation regulate its transcriptional regulatory activity. In terms of processing, under more reducing intracellular redox conditions, Cys-384 is in its heme-bound state, which is optimal for recruitment of the NCOR1/HDAC3 corepressor complex and repression of target genes. When subjected to oxidative stress conditions, Cys-384 undergoes oxidation to form a disulfide bridge with Cys-374, also triggering a ligand switch that results in release of bound heme and derepression of target genes. Post-translationally, ubiquitinated by SIAH2; leading to proteasomal degradation. Phosphorylated by CSNK1E; phosphorylation enhances its cytoplasmic localization. In terms of tissue distribution, widely expressed. Expressed at high levels in the liver, adipose tissue, skeletal muscle and brain. Expression oscillates diurnally in the suprachiasmatic nucleus (SCN) of the hypothalamus as well as in peripheral tissues.

The protein localises to the nucleus. It is found in the cytoplasm. The heme-bound form can bind gaseous signaling molecules such as CO and nitric oxide (NO) and NO can reverse its transcriptional repressor activity. In terms of biological role, transcriptional repressor which coordinates circadian rhythm and metabolic pathways in a heme-dependent manner. Integral component of the complex transcription machinery that governs circadian rhythmicity and forms a critical negative limb of the circadian clock by directly repressing the expression of core clock components BMAL1 and CLOCK. Also regulates genes involved in metabolic functions, including lipid metabolism and the inflammatory response. Acts as a receptor for heme which stimulates its interaction with the NCOR1/HDAC3 corepressor complex, enhancing transcriptional repression. Recognizes two classes of DNA response elements within the promoter of its target genes and can bind to DNA as either monomers or homodimers, depending on the nature of the response element. Binds as a monomer to a response element composed of the consensus half-site motif 5'-[A/G]GGTCA-3' preceded by an A/T-rich 5' sequence (RevRE), or as a homodimer to a direct repeat of the core motif spaced by two nuclegotides (RevDR-2). Acts as a potent competitive repressor of ROR alpha (RORA) function and also negatively regulates the expression of NR1D1. Regulates lipid and energy homeostasis in the skeletal muscle via repression of genes involved in lipid metabolism and myogenesis including: CD36, FABP3, FABP4, UCP3, SCD1 and MSTN. Regulates hepatic lipid metabolism via the repression of APOC3. Represses gene expression at a distance in macrophages by inhibiting the transcription of enhancer-derived RNAs (eRNAs). In addition to its activity as a repressor, can also act as a transcriptional activator. Acts as a transcriptional activator of the sterol regulatory element-binding protein 1 (SREBF1) and the inflammatory mediator interleukin-6 (IL6) in the skeletal muscle. Plays a role in the regulation of circadian sleep/wake cycle; essential for maintaining wakefulness during the dark phase or active period. Key regulator of skeletal muscle mitochondrial function; negatively regulates the skeletal muscle expression of core clock genes and genes involved in mitochondrial biogenesis, fatty acid beta-oxidation and lipid metabolism. May play a role in the circadian control of neutrophilic inflammation in the lung. This is Nuclear receptor subfamily 1 group D member 2 from Homo sapiens (Human).